The chain runs to 142 residues: Hemoglobin subunit alpha (142 aa).

The Globin domain maps to 2-142 (VLSPDDKKHV…VSTVLTSKYR (141 aa)). The residue at position 4 (serine 4) is a Phosphoserine. Lysine 8 and lysine 12 each carry N6-succinyllysine. Lysine 17 is modified (N6-acetyllysine; alternate). The residue at position 17 (lysine 17) is an N6-succinyllysine; alternate. Tyrosine 25 carries the post-translational modification Phosphotyrosine. The residue at position 36 (serine 36) is a Phosphoserine. Lysine 41 is modified (N6-succinyllysine). Residue serine 50 is modified to Phosphoserine. Residue histidine 59 coordinates O2. Histidine 88 provides a ligand contact to heme b. Serine 103 is modified (phosphoserine). Position 109 is a phosphothreonine (threonine 109). Phosphoserine occurs at positions 125 and 132. 2 positions are modified to phosphothreonine: threonine 135 and threonine 138. Serine 139 is subject to Phosphoserine.

This sequence belongs to the globin family. In terms of assembly, heterotetramer of two alpha chains and two beta chains. Red blood cells.

Involved in oxygen transport from the lung to the various peripheral tissues. In terms of biological role, hemopressin acts as an antagonist peptide of the cannabinoid receptor CNR1. Hemopressin-binding efficiently blocks cannabinoid receptor CNR1 and subsequent signaling. The protein is Hemoglobin subunit alpha (HBA) of Papio anubis (Olive baboon).